The following is a 92-amino-acid chain: MPLVGFMKEKKRATFYLYKNIDGRKLRYLLHKLENVENVDIDTLRRAIEAEKKYKRSITLTEEEEVIIQRLGKSANLLLNCELVKLDEGERA.

This is an uncharacterized protein from Methanocaldococcus jannaschii (strain ATCC 43067 / DSM 2661 / JAL-1 / JCM 10045 / NBRC 100440) (Methanococcus jannaschii).